Here is a 256-residue protein sequence, read N- to C-terminus: Putative cysteine-rich repeat secretory protein 21 (256 aa).

The first 30 residues, 1 to 30 (MYSSVSKRLVSVHILVVVALQLLFIPNVLS), serve as a signal peptide directing secretion. 2 consecutive Gnk2-homologous domains span residues 37-139 (YLHH…SIDT) and 145-253 (YQNN…LYPF).

It belongs to the cysteine-rich repeat secretory protein family.

It is found in the secreted. This is Putative cysteine-rich repeat secretory protein 21 (CRRSP21) from Arabidopsis thaliana (Mouse-ear cress).